We begin with the raw amino-acid sequence, 377 residues long: Ribosomal RNA large subunit methyltransferase G (377 aa).

Belongs to the methyltransferase superfamily. RlmG family.

The protein localises to the cytoplasm. It catalyses the reaction guanosine(1835) in 23S rRNA + S-adenosyl-L-methionine = N(2)-methylguanosine(1835) in 23S rRNA + S-adenosyl-L-homocysteine + H(+). In terms of biological role, specifically methylates the guanine in position 1835 (m2G1835) of 23S rRNA. The sequence is that of Ribosomal RNA large subunit methyltransferase G from Streptomyces coelicolor (strain ATCC BAA-471 / A3(2) / M145).